The primary structure comprises 153 residues: Cytochrome c-type biogenesis protein CcmE (153 aa).

Residues 1-8 (MTPVQRRR) are Cytoplasmic-facing. Residues 9 to 29 (LAWVLLALLASGLATALVAMA) form a helical; Signal-anchor for type II membrane protein membrane-spanning segment. The Extracellular segment spans residues 30–153 (LERNIAYLYT…DVPVTAPEVR (124 aa)). Heme is bound by residues His-123 and Tyr-127.

It belongs to the CcmE/CycJ family.

The protein resides in the cell membrane. Its function is as follows. Heme chaperone required for the biogenesis of c-type cytochromes. Transiently binds heme delivered by CcmC and transfers the heme to apo-cytochromes in a process facilitated by CcmF and CcmH. This chain is Cytochrome c-type biogenesis protein CcmE, found in Stenotrophomonas maltophilia (strain K279a).